Here is a 1466-residue protein sequence, read N- to C-terminus: MMSFVQKGSWLLLALLHPTIILAQQEAVEGGCSHLGQSYADRDVWKPEPCQICVCDSGSVLCDDIICDDQELDCPNPEIPFGECCAVCPQPPTAPTRPPNGQGPQGPKGDPGPPGIPGRNGDPGIPGQPGSPGSPGPPGICESCPTGPQNYSPQYDSYDVKSGVAVGGLAGYPGPAGPPGPPGPPGTSGHPGSPGSPGYQGPPGEPGQAGPSGPPGPPGAIGPSGPAGKDGESGRPGRPGERGLPGPPGIKGPAGIPGFPGMKGHRGFDGRNGEKGETGAPGLKGENGLPGENGAPGPMGPRGAPGERGRPGLPGAAGARGNDGARGSDGQPGPPGPPGTAGFPGSPGAKGEVGPAGSPGSNGAPGQRGEPGPQGHAGAQGPPGPPGINGSPGGKGEMGPAGIPGAPGLMGARGPPGPAGANGAPGLRGGAGEPGKNGAKGEPGPRGERGEAGIPGVPGAKGEDGKDGSPGEPGANGLPGAAGERGAPGFRGPAGPNGIPGEKGPAGERGAPGPAGPRGAAGEPGRDGVPGGPGMRGMPGSPGGPGSDGKPGPPGSQGESGRPGPPGPSGPRGQPGVMGFPGPKGNDGAPGKNGERGGPGGPGPQGPPGKNGETGPQGPPGPTGPGGDKGDTGPPGPQGLQGLPGTGGPPGENGKPGEPGPKGDAGAPGAPGGKGDAGAPGERGPPGLAGAPGLRGGAGPPGPEGGKGAAGPPGPPGAAGTPGLQGMPGERGGLGSPGPKGDKGEPGGPGADGVPGKDGPRGPTGPIGPPGPAGQPGDKGEGGAPGLPGIAGPRGSPGERGETGPPGPAGFPGAPGQNGEPGGKGERGAPGEKGEGGPPGVAGPPGGSGPAGPPGPQGVKGERGSPGGPGAAGFPGARGLPGPPGSNGNPGPPGPSGSPGKDGPPGPAGNTGAPGSPGVSGPKGDAGQPGEKGSPGAQGPPGAPGPLGIAGITGARGLAGPPGMPGPRGSPGPQGVKGESGKPGANGLSGERGPPGPQGLPGLAGTAGEPGRDGNPGSDGLPGRDGSPGGKGDRGENGSPGAPGAPGHPGPPGPVGPAGKSGDRGESGPAGPAGAPGPAGSRGAPGPQGPRGDKGETGERGAAGIKGHRGFPGNPGAPGSPGPAGQQGAIGSPGPAGPRGPVGPSGPPGKDGTSGHPGPIGPPGPRGNRGERGSEGSPGHPGQPGPPGPPGAPGPCCGGVGAAAIAGIGGEKAGGFAPYYGDEPMDFKINTDEIMTSLKSVNGQIESLISPDGSRKNPARNCRDLKFCHPELKSGEYWVDPNQGCKLDAIKVFCNMETGETCISANPLNVPRKHWWTDSSAEKKHVWFGESMDGGFQFSYGNPELPEDVLDVHLAFLRLLSSRASQNITYHCKNSIAYMDQASGNVKKALKLMGSNEGEFKAEGNSKFTYTVLEDGCTKHTGEWSKTVFEYRTRKAVRLPIVDIAPYDIGGPDQEFGVDVGPVCFL.

The signal sequence occupies residues 1–23 (MMSFVQKGSWLLLALLHPTIILA). A propeptide spans 24–153 (QQEAVEGGCS…CPTGPQNYSP (130 aa)) (N-terminal propeptide). Positions 30 to 89 (GGCSHLGQSYADRDVWKPEPCQICVCDSGSVLCDDIICDDQELDCPNPEIPFGECCAVCP) constitute a VWFC domain. The interval 95-1194 (PTRPPNGQGP…GPPGPPGAPG (1100 aa)) is disordered. Over residues 99–108 (PNGQGPQGPK) the composition is skewed to low complexity. The segment covering 146-155 (TGPQNYSPQY) has biased composition (polar residues). Residues 149-167 (QNYSPQYDSYDVKSGVAVG) are nonhelical region (N-terminal). The interval 168 to 1196 (GLAGYPGPAG…PGPPGAPGPC (1029 aa)) is triple-helical region. 17 positions are modified to 4-hydroxyproline: proline 173, proline 179, proline 182, proline 185, proline 191, proline 194, proline 197, proline 203, proline 206, proline 215, proline 218, proline 236, proline 239, proline 245, proline 248, proline 257, and proline 260. Positions 175–185 (PAGPPGPPGPP) are enriched in pro residues. Positions 187 to 199 (TSGHPGSPGSPGY) are enriched in low complexity. The segment covering 229-241 (KDGESGRPGRPGE) has biased composition (basic and acidic residues). Low complexity predominate over residues 251–260 (KGPAGIPGFP). Lysine 263 is subject to 5-hydroxylysine; alternate. An O-linked (Gal...) hydroxylysine; alternate glycan is attached at lysine 263. Residues 266 to 277 (RGFDGRNGEKGE) show a composition bias toward basic and acidic residues. Proline 281 is modified (4-hydroxyproline). Lysine 284 bears the 5-hydroxylysine mark. Residues proline 290, proline 296, proline 305, proline 311, proline 314, proline 332, proline 335, proline 338, proline 344, proline 347, proline 359, proline 365, proline 371, proline 383, proline 386, proline 392, proline 404, proline 407, proline 416, proline 425, proline 434, proline 443, proline 455, proline 458, proline 470, proline 473, proline 479, proline 488, proline 500, proline 512, proline 524, proline 530, proline 533, proline 539, proline 542, proline 545, proline 551, proline 554, proline 563, proline 566, proline 575, proline 581, proline 590, proline 599, proline 602, proline 608, proline 620, proline 635, proline 644, proline 650, proline 656, proline 659, proline 661, proline 668, proline 671, proline 680, proline 686, proline 692, proline 701, proline 703, proline 713, proline 716, proline 722, proline 728, proline 737, proline 746, proline 749, proline 755, proline 770, proline 776, proline 785, proline 788, proline 797, proline 806, proline 812, proline 815, proline 821, proline 830, proline 839, proline 845, and proline 854 each carry the 4-hydroxyproline modification. Residues 311–322 (PGLPGAAGARGN) show a composition bias toward low complexity. Positions 355–380 (PAGSPGSNGAPGQRGEPGPQGHAGAQ) are enriched in low complexity. Residues 390-399 (GSPGGKGEMG) show a composition bias toward gly residues. The span at 404–425 (PGAPGLMGARGPPGPAGANGAP) shows a compositional bias: low complexity. The segment covering 426 to 435 (GLRGGAGEPG) has biased composition (gly residues). Residues 478 to 523 (LPGAAGERGAPGFRGPAGPNGIPGEKGPAGERGAPGPAGPRGAAGE) are compositionally biased toward low complexity. Residues 528–549 (GVPGGPGMRGMPGSPGGPGSDG) show a composition bias toward gly residues. A compositionally biased stretch (gly residues) spans 642–651 (GLPGTGGPPG). The segment covering 669–678 (GAPGGKGDAG) has biased composition (gly residues). Residues 679–692 (APGERGPPGLAGAP) are compositionally biased toward low complexity. Residues 693–711 (GLRGGAGPPGPEGGKGAAG) are compositionally biased toward gly residues. The span at 729–738 (GERGGLGSPG) shows a compositional bias: gly residues. Over residues 787-796 (LPGIAGPRGS) the composition is skewed to low complexity. The segment covering 823–835 (GKGERGAPGEKGE) has biased composition (basic and acidic residues). Over residues 836-850 (GGPPGVAGPPGGSGP) the composition is skewed to gly residues. Position 860 is a 5-hydroxylysine (lysine 860). Over residues 864–873 (GSPGGPGAAG) the composition is skewed to gly residues. 4-hydroxyproline is present on residues proline 866, proline 869, proline 875, proline 881, proline 884, proline 890, proline 892, proline 899, proline 905, proline 914, proline 917, proline 929, proline 935, proline 941, and proline 944. Residues 890–907 (PGPPGPSGSPGKDGPPGP) are compositionally biased toward pro residues. Positions 908–917 (AGNTGAPGSP) are enriched in low complexity. Residues 946-961 (PLGIAGITGARGLAGP) are compositionally biased toward low complexity. 4-hydroxyproline is present on residues proline 962, proline 965, and proline 971. A 5-hydroxylysine modification is found at lysine 977. 4-hydroxyproline occurs at positions 983, 995, 1001, 1010, 1016, 1022, 1028, 1040, 1043, 1046, 1049, 1052, 1076, and 1085. A compositionally biased stretch (pro residues) spans 1046 to 1055 (PGHPGPPGPV). The segment covering 1067-1085 (SGPAGPAGAPGPAGSRGAP) has biased composition (low complexity). Lysine 1106 carries the post-translational modification 5-hydroxylysine. Proline 1112, proline 1115, proline 1118, proline 1121, proline 1133, proline 1148, proline 1157, proline 1163, proline 1178, proline 1181, proline 1184, proline 1187, proline 1190, and proline 1193 each carry 4-hydroxyproline. The segment covering 1123-1133 (PAGQQGAIGSP) has biased composition (low complexity). Residues 1181–1193 (PGQPGPPGPPGAP) show a composition bias toward pro residues. Residues 1197–1205 (CGGVGAAAI) are nonhelical region (C-terminal). A propeptide spans 1222-1466 (DEPMDFKINT…GVDVGPVCFL (245 aa)) (C-terminal propeptide). A Fibrillar collagen NC1 domain is found at 1232–1466 (DEIMTSLKSV…GVDVGPVCFL (235 aa)). Disulfide bonds link cysteine 1262-cysteine 1294, cysteine 1302-cysteine 1464, and cysteine 1372-cysteine 1417. Aspartate 1280, asparagine 1282, glutamine 1283, cysteine 1285, and aspartate 1288 together coordinate Ca(2+).

Belongs to the fibrillar collagen family. In terms of assembly, trimers of identical alpha 1(III) chains. The chains are linked to each other by interchain disulfide bonds. Trimers are also cross-linked via hydroxylysines. Interacts with ADGRG1. Proline residues at the third position of the tripeptide repeating unit (G-X-Y) are hydroxylated in some or all of the chains. In terms of processing, O-linked glycan consists of a Glc-Gal disaccharide bound to the oxygen atom of a post-translationally added hydroxyl group.

The protein resides in the secreted. It localises to the extracellular space. It is found in the extracellular matrix. Collagen type III occurs in most soft connective tissues along with type I collagen. Involved in regulation of cortical development. Is the major ligand of ADGRG1 in the developing brain and binding to ADGRG1 inhibits neuronal migration and activates the RhoA pathway by coupling ADGRG1 to GNA13 and possibly GNA12. The polypeptide is Collagen alpha-1(III) chain (COL3A1) (Homo sapiens (Human)).